A 199-amino-acid chain; its full sequence is Charged multivesicular body protein 1b (199 aa).

2 coiled-coil regions span residues 8–42 and 178–199; these read LFNLKFAAKELNRNAKKCEKEEKTEKAKIKKAIQK and TSVASTEQDELSQRLARLRDQV. Residues 167–199 are disordered; it reads ELPQGQTGSVGTSVASTEQDELSQRLARLRDQV. Polar residues predominate over residues 170–183; sequence QGQTGSVGTSVAST. The MIT-interacting motif signature appears at 186–196; sequence DELSQRLARLR.

The protein belongs to the SNF7 family. Probable peripherally associated component of the endosomal sorting required for transport complex III (ESCRT-III).

The protein localises to the cytoplasm. It is found in the cytosol. It localises to the endosome. The protein resides in the late endosome membrane. Its function is as follows. Probable peripherally associated component of the endosomal sorting required for transport complex III (ESCRT-III) which is involved in multivesicular bodies (MVBs) formation and sorting of endosomal cargo proteins into MVBs. MVBs contain intraluminal vesicles (ILVs) that are generated by invagination and scission from the limiting membrane of the endosome and mostly are delivered to lysosomes enabling degradation of membrane proteins, such as stimulated growth factor receptors, lysosomal enzymes and lipids. The sequence is that of Charged multivesicular body protein 1b (chmp1b) from Xenopus laevis (African clawed frog).